Here is a 282-residue protein sequence, read N- to C-terminus: Bifunctional protein FolD (282 aa).

NADP(+) contacts are provided by residues 164–166, Ile189, and Ile230; that span reads GAS.

This sequence belongs to the tetrahydrofolate dehydrogenase/cyclohydrolase family. In terms of assembly, homodimer.

It catalyses the reaction (6R)-5,10-methylene-5,6,7,8-tetrahydrofolate + NADP(+) = (6R)-5,10-methenyltetrahydrofolate + NADPH. The enzyme catalyses (6R)-5,10-methenyltetrahydrofolate + H2O = (6R)-10-formyltetrahydrofolate + H(+). Its pathway is one-carbon metabolism; tetrahydrofolate interconversion. Functionally, catalyzes the oxidation of 5,10-methylenetetrahydrofolate to 5,10-methenyltetrahydrofolate and then the hydrolysis of 5,10-methenyltetrahydrofolate to 10-formyltetrahydrofolate. The sequence is that of Bifunctional protein FolD from Campylobacter jejuni subsp. doylei (strain ATCC BAA-1458 / RM4099 / 269.97).